Here is a 201-residue protein sequence, read N- to C-terminus: MYRAGVTLLVVAVVSLGRWDVVTMAAAIGIGWYEPEVSMAYIYQYNDTNLTIFCNTTACNSPFLASGMMISAPLKTRFLTSKVNYSNDMDNDRKNYTHQLKYMLAGAPGTYVNSSVTCWGSNGTFGAKTFLVKSMVNNTDSNTNTSIIHFVQQDELVDNPAYFRRSNHRAFMIVILTQVVFVVFIINASFIWSWTFRRHKR.

The first 25 residues, 1-25 (MYRAGVTLLVVAVVSLGRWDVVTMA), serve as a signal peptide directing secretion. The Extracellular segment spans residues 26–170 (AAIGIGWYEP…AYFRRSNHRA (145 aa)). N-linked (GlcNAc...) asparagine; by host glycans are attached at residues asparagine 46, asparagine 49, asparagine 55, asparagine 84, asparagine 95, asparagine 113, asparagine 122, asparagine 137, and asparagine 144. Residues 171–191 (FMIVILTQVVFVVFIINASFI) traverse the membrane as a helical segment. Over 192–201 (WSWTFRRHKR) the chain is Cytoplasmic.

It belongs to the HHV-5 UL120 protein family.

Its subcellular location is the host membrane. This is an uncharacterized protein from Homo sapiens (Human).